The following is a 145-amino-acid chain: D-aminoacyl-tRNA deacylase (145 aa).

The Gly-cisPro motif, important for rejection of L-amino acids signature appears at 137 to 138 (GP).

This sequence belongs to the DTD family. Homodimer.

It localises to the cytoplasm. The enzyme catalyses glycyl-tRNA(Ala) + H2O = tRNA(Ala) + glycine + H(+). It catalyses the reaction a D-aminoacyl-tRNA + H2O = a tRNA + a D-alpha-amino acid + H(+). Its function is as follows. An aminoacyl-tRNA editing enzyme that deacylates mischarged D-aminoacyl-tRNAs. Also deacylates mischarged glycyl-tRNA(Ala), protecting cells against glycine mischarging by AlaRS. Acts via tRNA-based rather than protein-based catalysis; rejects L-amino acids rather than detecting D-amino acids in the active site. By recycling D-aminoacyl-tRNA to D-amino acids and free tRNA molecules, this enzyme counteracts the toxicity associated with the formation of D-aminoacyl-tRNA entities in vivo and helps enforce protein L-homochirality. In Shigella dysenteriae serotype 1 (strain Sd197), this protein is D-aminoacyl-tRNA deacylase.